A 198-amino-acid chain; its full sequence is Recombination protein RecR (198 aa).

The C4-type zinc-finger motif lies at 57–72; the sequence is CAMCNTFTEHEVCETC. The Toprim domain occupies 80 to 175; that stretch reads ALLCVVETPG…KVSRLARGVP (96 aa).

This sequence belongs to the RecR family.

In terms of biological role, may play a role in DNA repair. It seems to be involved in an RecBC-independent recombinational process of DNA repair. It may act with RecF and RecO. This Janthinobacterium sp. (strain Marseille) (Minibacterium massiliensis) protein is Recombination protein RecR.